A 421-amino-acid chain; its full sequence is 2',3'-cyclic-nucleotide 3'-phosphodiesterase (421 aa).

2 positions are modified to phosphoserine: serine 6 and serine 9. At tyrosine 110 the chain carries Phosphotyrosine. Serine 170 is subject to Phosphoserine. Catalysis depends on histidine 251, which acts as the Proton acceptor. Threonine 253 serves as a coordination point for substrate. Histidine 330 functions as the Proton donor in the catalytic mechanism. Threonine 332 is a substrate binding site. Serine 359 carries the phosphoserine modification. Cysteine 418 carries the post-translational modification Cysteine methyl ester. A lipid anchor (S-farnesyl cysteine) is attached at cysteine 418. Positions 419–421 (TII) are cleaved as a propeptide — removed in mature form.

Belongs to the 2H phosphoesterase superfamily. CNPase family. As to quaternary structure, exists as monomers and homodimers.

The protein localises to the membrane. It localises to the melanosome. It catalyses the reaction a nucleoside 2',3'-cyclic phosphate + H2O = a nucleoside 2'-phosphate + H(+). Catalyzes the formation of 2'-nucleotide products from 2',3'-cyclic substrates. May participate in RNA metabolism in the myelinating cell, CNP is the third most abundant protein in central nervous system myelin. The sequence is that of 2',3'-cyclic-nucleotide 3'-phosphodiesterase from Homo sapiens (Human).